Reading from the N-terminus, the 275-residue chain is Large ribosomal subunit protein uL2c (275 aa).

Residues 225 to 249 are disordered; the sequence is PVDHPHGGGEGRAPIGRKKPTTPWG.

It belongs to the universal ribosomal protein uL2 family. Part of the 50S ribosomal subunit.

Its subcellular location is the plastid. The protein is Large ribosomal subunit protein uL2c (rpl2) of Cuscuta reflexa (Southern Asian dodder).